The following is a 345-amino-acid chain: MSNMMKALVKSKAEVGLWMEDVPVPEVGPNDVLIRVKKSAICGTDVHIWNWDQWAQKTIPVPMVVGHEFSGEIAEIGSAVTRYHVGERVSGEGHIVCGKCRNCRAGRGHLCRNTLGVGVNRPGSFGEFVCIPESNVVPIPDDISDEIAAIFDPFGNAVHTALSFDLVGEDVLVTGAGPIGIMGALVAKRSGARKVVITDINPHRLDLARKLGIDHVVDASKENLADVMKAIGMTEGFDVGLEMSGAAPAFRDMIDKMNNGGKIAILGIAPAGFEIDWNKVIFKMLNLKGIYGREMFETWYKMIAFVQGGLDLSPIITHRIKIDDFRDGFEAMRSGNSGKVVMDWM.

Cys42 contacts Zn(2+). Residues Thr44 and His47 each act as charge relay system in the active site. Zn(2+) is bound by residues His67, Glu68, Cys97, Cys100, Cys103, and Cys111. Residues Ile179, Asp199, Arg204, 266-268, and 290-291 each bind NAD(+); these read LGI and IY.

The protein belongs to the zinc-containing alcohol dehydrogenase family. In terms of assembly, homotetramer. It depends on Zn(2+) as a cofactor.

Its subcellular location is the cytoplasm. It carries out the reaction L-threonine + NAD(+) = (2S)-2-amino-3-oxobutanoate + NADH + H(+). The protein operates within amino-acid degradation; L-threonine degradation via oxydo-reductase pathway; glycine from L-threonine: step 1/2. Catalyzes the NAD(+)-dependent oxidation of L-threonine to 2-amino-3-ketobutyrate. This Rhizobium etli (strain CIAT 652) protein is L-threonine 3-dehydrogenase.